We begin with the raw amino-acid sequence, 68 residues long: Putative membrane protein insertion efficiency factor (68 aa).

Belongs to the UPF0161 family.

The protein resides in the cell inner membrane. In terms of biological role, could be involved in insertion of integral membrane proteins into the membrane. The sequence is that of Putative membrane protein insertion efficiency factor from Aquifex aeolicus (strain VF5).